The chain runs to 219 residues: Trafficking protein particle complex subunit 4 (219 aa).

Belongs to the TRAPP small subunits family. TRAPPC4 subfamily. In terms of assembly, component of the multisubunit TRAPP (transport protein particle) complex, which includes at least TRAPPC2, TRAPPC2L, TRAPPC3, TRAPPC3L, TRAPPC4, TRAPPC5, TRAPPC8, TRAPPC9, TRAPPC10, TRAPPC11 and TRAPPC12. Interacts with SDC2. Widely expressed.

It localises to the postsynaptic cell membrane. Its subcellular location is the golgi apparatus membrane. The protein resides in the endoplasmic reticulum. The protein localises to the vesicle. Its function is as follows. Core component of the TRAPP complexes which has a function of guanine nucleotide exchange factor activity for Rab1 GTPase. Plays a role in vesicular transport from endoplasmic reticulum to Golgi and autophagy. May play a role in dendrite postsynaptic membrane trafficking. This is Trafficking protein particle complex subunit 4 from Mus musculus (Mouse).